Consider the following 406-residue polypeptide: Putative cfxQ-like protein R730 (406 aa).

A disordered region spans residues 1 to 37 (MKRSHDSITRSINSDNDSETNMNSDNNNNNKPNQRKK). A compositionally biased stretch (low complexity) spans 13–32 (NSDNDSETNMNSDNNNNNKP). Residue 173-180 (GPPGVGKS) coordinates ATP.

It belongs to the CbxX/CfxQ family.

This is Putative cfxQ-like protein R730 from Acanthamoeba polyphaga mimivirus (APMV).